We begin with the raw amino-acid sequence, 329 residues long: uncharacterized protein (329 aa).

The next 2 membrane-spanning stretches (helical) occupy residues 13–35 and 229–248; these read IPVL…WATI and VIPA…SVVY.

Its subcellular location is the cell membrane. This is an uncharacterized protein from Archaeoglobus fulgidus (strain ATCC 49558 / DSM 4304 / JCM 9628 / NBRC 100126 / VC-16).